A 1353-amino-acid polypeptide reads, in one-letter code: Patatin-like phospholipase domain-containing protein ZK370.4 (1353 aa).

A helical transmembrane segment spans residues 12–32 (IFLVTFIYNHVLLILFTVCII). Residues 49–64 (TPSSASSSATPSSRNS) show a composition bias toward low complexity. Disordered regions lie at residues 49–188 (TPSS…STAF) and 199–218 (SRSYFRQNQENNKDTRVRPP). Polar residues predominate over residues 91 to 123 (SPKSGTPTNTQTIEPPTSLNLNMVNSASGSNLS). Composition is skewed to basic residues over residues 126–138 (RRMRKRDWAKKLY) and 170–184 (PRRRSKHGNSSRRRQ). A nucleoside 3',5'-cyclic phosphate-binding positions include 245–372 (LKML…VITR), 444–581 (FGLV…VLRR), and 570–692 (IYLP…LGQY). Residues 942 to 1108 (LVLGGGGARG…VNNVPADVMR (167 aa)) enclose the PNPLA domain. The short motif at 946-951 (GGGARG) is the GXGXXG element. Residues 973–977 (GTSIG) carry the GXSXG motif. Serine 975 functions as the Nucleophile in the catalytic mechanism. The active-site Proton acceptor is aspartate 1095. Residues 1095–1097 (DGG) carry the DGA/G motif. 3 disordered regions span residues 1230–1249 (EKETRKFKRQQSRREKPDVS), 1274–1293 (SMSLNPSANGPVGRAGDHFL), and 1305–1353 (YEEE…PPSS). Low complexity predominate over residues 1328-1337 (GPPSSSSSGG).

This sequence belongs to the NTE family.

The protein resides in the membrane. This chain is Patatin-like phospholipase domain-containing protein ZK370.4, found in Caenorhabditis elegans.